The sequence spans 320 residues: Aspartate carbamoyltransferase catalytic subunit (320 aa).

Residues Arg-57 and Thr-58 each coordinate carbamoyl phosphate. Lys-85 contributes to the L-aspartate binding site. Positions 107, 141, and 144 each coordinate carbamoyl phosphate. Arg-174 and Arg-228 together coordinate L-aspartate. Carbamoyl phosphate is bound by residues Gly-269 and Pro-270.

Belongs to the aspartate/ornithine carbamoyltransferase superfamily. ATCase family. Heterododecamer (2C3:3R2) of six catalytic PyrB chains organized as two trimers (C3), and six regulatory PyrI chains organized as three dimers (R2).

It carries out the reaction carbamoyl phosphate + L-aspartate = N-carbamoyl-L-aspartate + phosphate + H(+). It functions in the pathway pyrimidine metabolism; UMP biosynthesis via de novo pathway; (S)-dihydroorotate from bicarbonate: step 2/3. Catalyzes the condensation of carbamoyl phosphate and aspartate to form carbamoyl aspartate and inorganic phosphate, the committed step in the de novo pyrimidine nucleotide biosynthesis pathway. This Mycobacterium marinum (strain ATCC BAA-535 / M) protein is Aspartate carbamoyltransferase catalytic subunit.